Here is a 204-residue protein sequence, read N- to C-terminus: Holliday junction branch migration complex subunit RuvA (204 aa).

The tract at residues 1–64 (MIGRLRGILL…EDAQLLYGFN (64 aa)) is domain I. The segment at 65-143 (TVKERALFRE…GWSAGDLFTP (79 aa)) is domain II. The flexible linker stretch occupies residues 144–155 (FTDAAPVDSGST). Residues 156-204 (SSNSAEEEAVSALLALGYKPVQASKVVSQIAKPDMTSEQLIREALKSMV) form a domain III region.

This sequence belongs to the RuvA family. Homotetramer. Forms an RuvA(8)-RuvB(12)-Holliday junction (HJ) complex. HJ DNA is sandwiched between 2 RuvA tetramers; dsDNA enters through RuvA and exits via RuvB. An RuvB hexamer assembles on each DNA strand where it exits the tetramer. Each RuvB hexamer is contacted by two RuvA subunits (via domain III) on 2 adjacent RuvB subunits; this complex drives branch migration. In the full resolvosome a probable DNA-RuvA(4)-RuvB(12)-RuvC(2) complex forms which resolves the HJ.

The protein resides in the cytoplasm. In terms of biological role, the RuvA-RuvB-RuvC complex processes Holliday junction (HJ) DNA during genetic recombination and DNA repair, while the RuvA-RuvB complex plays an important role in the rescue of blocked DNA replication forks via replication fork reversal (RFR). RuvA specifically binds to HJ cruciform DNA, conferring on it an open structure. The RuvB hexamer acts as an ATP-dependent pump, pulling dsDNA into and through the RuvAB complex. HJ branch migration allows RuvC to scan DNA until it finds its consensus sequence, where it cleaves and resolves the cruciform DNA. This Vibrio vulnificus (strain CMCP6) protein is Holliday junction branch migration complex subunit RuvA.